A 473-amino-acid polypeptide reads, in one-letter code: Phosphoglucosamine mutase (473 aa).

The Phosphoserine intermediate role is filled by serine 102. Mg(2+)-binding residues include serine 102, aspartate 248, aspartate 250, and aspartate 252. Serine 102 is subject to Phosphoserine.

This sequence belongs to the phosphohexose mutase family. Requires Mg(2+) as cofactor. In terms of processing, activated by phosphorylation.

The catalysed reaction is alpha-D-glucosamine 1-phosphate = D-glucosamine 6-phosphate. In terms of biological role, catalyzes the conversion of glucosamine-6-phosphate to glucosamine-1-phosphate. The chain is Phosphoglucosamine mutase from Rhodospirillum centenum (strain ATCC 51521 / SW).